The primary structure comprises 824 residues: Frameshifted structural polyprotein (824 aa).

Residues 1-10 are compositionally biased toward polar residues; the sequence is MEFIPTQTFY. The disordered stretch occupies residues 1–104; the sequence is MEFIPTQTFY…KKKKPGRRER (104 aa). The span at 22 to 44 shows a compositional bias: low complexity; it reads RPTIQVIRPRPRPQRQAGQLAQL. A host transcription inhibition region spans residues 36 to 68; it reads RQAGQLAQLISAVNKLTMRAVPQQKPRKNRKNK. Residues 60–72 are compositionally biased toward basic residues; the sequence is KPRKNRKNKKQKQ. The Nuclear localization signal signature appears at 61-99; it reads PRKNRKNKKQKQKQQAPQNNTNQKKQPPKKKPAQKKKKP. A compositionally biased stretch (low complexity) spans 73-85; the sequence is KQQAPQNNTNQKK. Residues 84–114 form a binding to the viral RNA region; it reads KKQPPKKKPAQKKKKPGRRERMCMKIENDCI. Residues 86 to 101 show a composition bias toward basic residues; that stretch reads QPPKKKPAQKKKKPGR. Ribosome-binding regions lie at residues 91-100 and 99-113; these read KPAQKKKKPG and PGRR…ENDC. Cys-113 and Cys-128 form a disulfide bridge. Positions 113–261 constitute a Peptidase S3 domain; the sequence is CIFEVKHEGK…KITPEGAEEW (149 aa). The active-site Charge relay system is His-139. Residues 144–154 carry the Nuclear export signal motif; the sequence is IDNADLAKLAF. Residue Asp-161 is the Charge relay system of the active site. The segment at 183–193 is dimerization of the capsid protein; it reads PEGYYNWHHGA. Ser-213 functions as the Charge relay system in the catalytic mechanism. Positions 219–223 are dimerization of the capsid protein; that stretch reads DNKGR. The interval 262–274 is functions as an uncleaved signal peptide for the precursor of protein E3/E2; the sequence is SLAIPVMCLLANT. Residues 262–692 lie on the Extracellular side of the membrane; the sequence is SLAIPVMCLL…YYYELYPTMT (431 aa). 3 N-linked (GlcNAc...) asparagine; by host glycosylation sites follow: Asn-273, Asn-588, and Asn-670. The helical transmembrane segment at 693–713 threads the bilayer; the sequence is VVVVSVASFILLSMVGMAVGM. Over 714-748 the chain is Cytoplasmic; that stretch reads CMCARRRCITPYELTPGATVPFLLSLICCIRTAKA. Residues Cys-721, Cys-741, and Cys-742 are each lipidated (S-palmitoyl cysteine; by host). The segment at 721–741 is transient transmembrane before p62-6K protein processing; it reads CITPYELTPGATVPFLLSLIC. The Extracellular segment spans residues 749-763; it reads ATYQEAAVYLWNEQQ. A helical transmembrane segment spans residues 764 to 784; sequence PLFWLQALIPLAALIVLCNCL. Residues 785–795 are Cytoplasmic-facing; it reads RLLPCCCKTLA.

The protein belongs to the alphavirus frameshifted structural polyprotein family. In terms of assembly, homodimer. Homomultimer. Interacts with host karyopherin KPNA4; this interaction allows the nuclear import of the viral capsid protein. Interacts with spike glycoprotein E2. Interacts with host IRAK1; the interaction leads to inhibition of IRAK1-dependent signaling. The precursor of protein E3/E2 and E1 form a heterodimer shortly after synthesis. As to quaternary structure, processing of the precursor of protein E3/E2 into E2 and E3 results in a heterodimer of the spike glycoproteins E2 and E1. Spike at virion surface are constituted of three E2-E1 heterodimers. Interacts with 6K protein. Interacts with host MXRA8; this interaction mediates virus entry. Specific enzymatic cleavages in vivo yield mature proteins. Capsid protein is auto-cleaved during polyprotein translation, unmasking a signal peptide at the N-terminus of the precursor of E3/E2. The remaining polyprotein is then targeted to the host endoplasmic reticulum, where host signal peptidase cleaves it into pE2 and TF. pE2 is further processed to mature E3 and E2 by host furin in trans-Golgi vesicle. Post-translationally, palmitoylated via thioester bonds. These palmitoylations may induce disruption of the C-terminus transmembrane. This would result in the reorientation of E2 C-terminus from lumenal to cytoplasmic side. In terms of processing, palmitoylated via thioester bonds.

The protein resides in the virion. It is found in the host cytoplasm. Its subcellular location is the host cell membrane. The protein localises to the host nucleus. It localises to the virion membrane. The enzyme catalyses Autocatalytic release of the core protein from the N-terminus of the togavirus structural polyprotein by hydrolysis of a -Trp-|-Ser- bond.. Forms an icosahedral capsid with a T=4 symmetry composed of 240 copies of the capsid protein surrounded by a lipid membrane through which penetrate 80 spikes composed of trimers of E1-E2 heterodimers. The capsid protein binds to the viral RNA genome at a site adjacent to a ribosome binding site for viral genome translation following genome release. Possesses a protease activity that results in its autocatalytic cleavage from the nascent structural protein. Following its self-cleavage, the capsid protein transiently associates with ribosomes, and within several minutes the protein binds to viral RNA and rapidly assembles into icosahedric core particles. The resulting nucleocapsid eventually associates with the cytoplasmic domain of the spike glycoprotein E2 at the cell membrane, leading to budding and formation of mature virions. In case of infection, new virions attach to target cells and after clathrin-mediated endocytosis their membrane fuses with the host endosomal membrane. This leads to the release of the nucleocapsid into the cytoplasm, followed by an uncoating event necessary for the genomic RNA to become accessible. The uncoating might be triggered by the interaction of capsid proteins with ribosomes. Binding of ribosomes would release the genomic RNA since the same region is genomic RNA-binding and ribosome-binding. Specifically inhibits interleukin-1 receptor-associated kinase 1/IRAK1-dependent signaling during viral entry, representing a means by which the alphaviruses may evade innate immune detection and activation prior to viral gene expression. In terms of biological role, provides the signal sequence for the translocation of the precursor of protein E3/E2 to the host endoplasmic reticulum. Furin-cleaved E3 remains associated with spike glycoprotein E1 and mediates pH protection of the latter during the transport via the secretory pathway. After virion release from the host cell, the assembly protein E3 is gradually released in the extracellular space. Its function is as follows. Plays a role in viral attachment to target host cell, by binding to the cell receptor. Synthesized as a p62 precursor which is processed by furin at the cell membrane just before virion budding, giving rise to E2-E1 heterodimer. The p62-E1 heterodimer is stable, whereas E2-E1 is unstable and dissociate at low pH. p62 is processed at the last step, presumably to avoid E1 fusion activation before its final export to cell surface. E2 C-terminus contains a transitory transmembrane that would be disrupted by palmitoylation, resulting in reorientation of the C-terminal tail from lumenal to cytoplasmic side. This step is critical since E2 C-terminus is involved in budding by interacting with capsid proteins. This release of E2 C-terminus in cytoplasm occurs lately in protein export, and precludes premature assembly of particles at the endoplasmic reticulum membrane. Functionally, plays a role in viral assembly and release. The chain is Frameshifted structural polyprotein from Aedes aegypti (Yellowfever mosquito).